The chain runs to 648 residues: Protein kinase YegI (648 aa).

The Protein kinase domain occupies 15–302 (TTLGRELGKG…KAWVAALDSL (288 aa)). ATP is bound by residues 21 to 29 (LGKGGEGAV) and Lys-41. Asp-143 serves as the catalytic Proton acceptor.

Post-translationally, autophosphorylated. Dephosphorylated by PphC.

Probable serine/threonine kinase. In Escherichia coli (strain K12), this protein is Protein kinase YegI (yegI).